The sequence spans 594 residues: Parathyroid hormone/parathyroid hormone-related peptide receptor (594 aa).

An N-terminal signal peptide occupies residues 1–28 (MGTARIAPGLALLLCCPVLSSAYALVDA). At 29–188 (DDVMTKEEQI…TREREVFDRL (160 aa)) the chain is on the extracellular side. 3 cysteine pairs are disulfide-bonded: Cys-48-Cys-117, Cys-108-Cys-149, and Cys-132-Cys-171. The tract at residues 66-102 (DKGWTSASTSGKPRKDKASGKLYPESEEDKEAPTDSR) is disordered. 4 N-linked (GlcNAc...) asparagine glycosylation sites follow: Asn-152, Asn-162, Asn-167, and Asn-177. The helical transmembrane segment at 189 to 209 (GMIYTVGYSMSLASLTVAVLI) threads the bilayer. Over 210 to 223 (LAYFRRLHCTRNYI) the chain is Cytoplasmic. The helical transmembrane segment at 224 to 244 (HMHLFLSFMLRAVSIFVKDAV) threads the bilayer. The Extracellular portion of the chain corresponds to 245-295 (LYSGATLDEAERLTEEELRAIAQAPPPPATAAAGYAGCRVAVTFFLYFLAT). The chain crosses the membrane as a helical span at residues 296-316 (NYYWILVEGLYLHSLIFMAFF). The Cytoplasmic portion of the chain corresponds to 317-319 (SEK). The helical transmembrane segment at 320–340 (KYLWGFTVFGWGLPAVFVAVW) threads the bilayer. Residues 341 to 361 (VSVRATLANTGCWDLSSGNKK) lie on the Extracellular side of the membrane. A helical transmembrane segment spans residues 362–382 (WIIQVPILASIVLHFILFINI). At 383-405 (VRVLATKLRETNAGRCDTRQQYR) the chain is on the cytoplasmic side. Residues 406 to 426 (KLLKSTLVLMPLFGVHYIVFM) traverse the membrane as a helical segment. Residues 427-440 (ATPYTEVSGTLWQV) are Extracellular-facing. The chain crosses the membrane as a helical span at residues 441 to 461 (QMHYEMLFNSFQGFFVAIIYC). At 462–594 (FCNGEVQAEI…LLQEEWETVM (133 aa)) the chain is on the cytoplasmic side. An Important for interaction with G proteins motif is present at residues 475–478 (WSRW). A disordered region spans residues 525 to 594 (PTATTNGHPQ…LLQEEWETVM (70 aa)). Positions 543-558 (TPALETLETTPPATAA) are enriched in low complexity. A Phosphothreonine modification is found at Thr-552.

It belongs to the G-protein coupled receptor 2 family. As to quaternary structure, homodimer in the absence of bound ligand. Peptide hormone binding leads to dissociation of the homodimer. Post-translationally, N-glycosylated.

It localises to the cell membrane. G-protein-coupled receptor for parathyroid hormone (PTH) and for parathyroid hormone-related peptide (PTHLH). Ligand binding causes a conformation change that triggers signaling via guanine nucleotide-binding proteins (G proteins) and modulates the activity of downstream effectors, such as adenylate cyclase (cAMP). PTH1R is coupled to G(s) G alpha proteins and mediates activation of adenylate cyclase activity. PTHLH dissociates from PTH1R more rapidly than PTH; as consequence, the cAMP response induced by PTHLH decays faster than the response induced by PTH. The chain is Parathyroid hormone/parathyroid hormone-related peptide receptor (PTH1R) from Pongo abelii (Sumatran orangutan).